The primary structure comprises 133 residues: Small ribosomal subunit protein uS8 (133 aa).

This sequence belongs to the universal ribosomal protein uS8 family. As to quaternary structure, part of the 30S ribosomal subunit. Contacts proteins S5 and S12.

Functionally, one of the primary rRNA binding proteins, it binds directly to 16S rRNA central domain where it helps coordinate assembly of the platform of the 30S subunit. In Amoebophilus asiaticus (strain 5a2), this protein is Small ribosomal subunit protein uS8.